The primary structure comprises 159 residues: Endoribonuclease YbeY (159 aa).

The Zn(2+) site is built by histidine 125, histidine 129, and histidine 135.

It belongs to the endoribonuclease YbeY family. It depends on Zn(2+) as a cofactor.

The protein localises to the cytoplasm. In terms of biological role, single strand-specific metallo-endoribonuclease involved in late-stage 70S ribosome quality control and in maturation of the 3' terminus of the 16S rRNA. The protein is Endoribonuclease YbeY of Limosilactobacillus reuteri (strain DSM 20016) (Lactobacillus reuteri).